The following is a 60-amino-acid chain: Stress response protein YkoL (60 aa).

This chain is Stress response protein YkoL (ykoL), found in Bacillus subtilis (strain 168).